A 193-amino-acid chain; its full sequence is Phosphoheptose isomerase (193 aa).

Residues 37-193 form the SIS domain; that stretch reads LADSFKAGGK…QLIEKEMVKA (157 aa). 52–54 provides a ligand contact to substrate; it reads NGG. Residues His-61 and Glu-65 each contribute to the Zn(2+) site. Residues Glu-65, 93 to 94, 119 to 121, Ser-124, and Gln-172 each bind substrate; these read ND and STS. Residues Gln-172 and His-180 each contribute to the Zn(2+) site.

Belongs to the SIS family. GmhA subfamily. In terms of assembly, homotetramer. Zn(2+) is required as a cofactor.

The protein resides in the cytoplasm. It catalyses the reaction 2 D-sedoheptulose 7-phosphate = D-glycero-alpha-D-manno-heptose 7-phosphate + D-glycero-beta-D-manno-heptose 7-phosphate. The protein operates within carbohydrate biosynthesis; D-glycero-D-manno-heptose 7-phosphate biosynthesis; D-glycero-alpha-D-manno-heptose 7-phosphate and D-glycero-beta-D-manno-heptose 7-phosphate from sedoheptulose 7-phosphate: step 1/1. In terms of biological role, catalyzes the isomerization of sedoheptulose 7-phosphate in D-glycero-D-manno-heptose 7-phosphate. The polypeptide is Phosphoheptose isomerase (Yersinia pseudotuberculosis serotype O:1b (strain IP 31758)).